Here is a 175-residue protein sequence, read N- to C-terminus: SsrA-binding protein (175 aa).

The protein belongs to the SmpB family.

It localises to the cytoplasm. Functionally, required for rescue of stalled ribosomes mediated by trans-translation. Binds to transfer-messenger RNA (tmRNA), required for stable association of tmRNA with ribosomes. tmRNA and SmpB together mimic tRNA shape, replacing the anticodon stem-loop with SmpB. tmRNA is encoded by the ssrA gene; the 2 termini fold to resemble tRNA(Ala) and it encodes a 'tag peptide', a short internal open reading frame. During trans-translation Ala-aminoacylated tmRNA acts like a tRNA, entering the A-site of stalled ribosomes, displacing the stalled mRNA. The ribosome then switches to translate the ORF on the tmRNA; the nascent peptide is terminated with the 'tag peptide' encoded by the tmRNA and targeted for degradation. The ribosome is freed to recommence translation, which seems to be the essential function of trans-translation. The sequence is that of SsrA-binding protein from Prochlorococcus marinus subsp. pastoris (strain CCMP1986 / NIES-2087 / MED4).